A 364-amino-acid polypeptide reads, in one-letter code: Protein PTOV1 homolog (364 aa).

Residues alanine 187–valine 207 form a disordered region.

This sequence belongs to the Mediator complex subunit 25 family. PTOV1 subfamily.

The chain is Protein PTOV1 homolog from Drosophila melanogaster (Fruit fly).